Consider the following 412-residue polypeptide: Argininosuccinate synthase (412 aa).

An ATP-binding site is contributed by 10 to 18; that stretch reads AYSGGLDTS. L-citrulline is bound at residue Tyr-89. Gly-119 provides a ligand contact to ATP. L-aspartate-binding residues include Thr-121, Asn-125, and Asp-126. Asn-125 lines the L-citrulline pocket. Positions 129, 177, 261, and 273 each coordinate L-citrulline.

It belongs to the argininosuccinate synthase family. Type 1 subfamily. In terms of assembly, homotetramer.

It localises to the cytoplasm. It carries out the reaction L-citrulline + L-aspartate + ATP = 2-(N(omega)-L-arginino)succinate + AMP + diphosphate + H(+). It functions in the pathway amino-acid biosynthesis; L-arginine biosynthesis; L-arginine from L-ornithine and carbamoyl phosphate: step 2/3. The protein is Argininosuccinate synthase of Bifidobacterium longum subsp. infantis (strain ATCC 15697 / DSM 20088 / JCM 1222 / NCTC 11817 / S12).